We begin with the raw amino-acid sequence, 127 residues long: E3 ubiquitin-protein ligase PPP1R11 (127 aa).

2 disordered regions span residues 1 to 55 and 70 to 127; these read MAEA…EHMG and AFGE…PMQH. At A2 the chain carries N-acetylalanine. Positions 11 to 23 are enriched in low complexity; it reads ETVTETTVTVTTE. A compositionally biased stretch (basic and acidic residues) spans 40–55; that stretch reads KKVEWSSDTVDNEHMG. The interval 53 to 63 is atypical RING finger domain 1; it reads HMGRRSSKCCC. 2 positions are modified to phosphoserine: S74 and S75. Phosphothreonine is present on T76. S78 is subject to Phosphoserine. The atypical RING finger domain 2 stretch occupies residues 86 to 95; sequence CGHTHCVRGH. The segment covering 90–100 has biased composition (basic residues); the sequence is HCVRGHRKGRR. Over residues 103–127 the composition is skewed to pro residues; the sequence is TPGPTPTTPPQPPDPSQPPPGPMQH. Phosphothreonine is present on T110.

As to quaternary structure, interacts with TLR2 and UBE2D2. In terms of processing, auto-ubiquitinated.

The catalysed reaction is S-ubiquitinyl-[E2 ubiquitin-conjugating enzyme]-L-cysteine + [acceptor protein]-L-lysine = [E2 ubiquitin-conjugating enzyme]-L-cysteine + N(6)-ubiquitinyl-[acceptor protein]-L-lysine.. It functions in the pathway protein modification; protein ubiquitination. In terms of biological role, atypical E3 ubiquitin-protein ligase which ubiquitinates TLR2 at 'Lys-754' leading to its degradation by the proteasome. Plays a role in regulating inflammatory cytokine release and gram-positive bacterial clearance by functioning, in part, through the ubiquitination and degradation of TLR2. Inhibitor of protein phosphatase 1. The protein is E3 ubiquitin-protein ligase PPP1R11 (Ppp1r11) of Rattus norvegicus (Rat).